A 217-amino-acid chain; its full sequence is Guanylate kinase (217 aa).

One can recognise a Guanylate kinase-like domain in the interval 15 to 194; sequence GLMLVLSSPS…AYQRLKRILL (180 aa). 22 to 29 contributes to the ATP binding site; sequence SPSGAGKT.

Belongs to the guanylate kinase family.

It localises to the cytoplasm. The enzyme catalyses GMP + ATP = GDP + ADP. Essential for recycling GMP and indirectly, cGMP. This chain is Guanylate kinase, found in Hyphomonas neptunium (strain ATCC 15444).